Here is a 673-residue protein sequence, read N- to C-terminus: Protein kinase C delta type (673 aa).

The 106-residue stretch at M1–L106 folds into the C2 domain. Phosphothreonine occurs at positions 43 and 50. The residue at position 64 (Y64) is a Phosphotyrosine. Residue S130 is modified to Phosphoserine. T141 carries the post-translational modification Phosphothreonine. A Phosphotyrosine modification is found at Y155. Residues N158 to C208 form a Phorbol-ester/DAG-type 1 zinc finger. The residue at position 218 (T218) is a Phosphothreonine. Residues P230–C280 form a Phorbol-ester/DAG-type 2 zinc finger. Phosphoserine; by autocatalysis is present on S299. 2 positions are modified to phosphotyrosine; by SRC: Y311 and Y332. In terms of domain architecture, Protein kinase spans F347 to F601. L353–V361 lines the ATP pocket. Y372 bears the Phosphotyrosine mark. An ATP-binding site is contributed by K376. Position 449 is a phosphothreonine (T449). D471 (proton acceptor) is an active-site residue. At S504 the chain carries Phosphoserine. The residue at position 505 (T505) is a Phosphothreonine; by autocatalysis. The residue at position 565 (Y565) is a Phosphotyrosine. The 72-residue stretch at K602–E673 folds into the AGC-kinase C-terminal domain. Residues S643, S652, and S662 each carry the phosphoserine modification.

Belongs to the protein kinase superfamily. AGC Ser/Thr protein kinase family. PKC subfamily. As to quaternary structure, interacts with PDPK1 (via N-terminal region). Interacts with RAD9A. Interacts with CDCP1. Interacts with MUC1. Interacts with VASP. Interacts with CAVIN3. Interacts with PRKD2 (via N-terminus and zing-finger domain 1 and 2) in response to oxidative stress; the interaction is independent of PRKD2 tyrosine phosphorylation. Interacts with PLSC3; interaction is enhanced by UV irradiation. Post-translationally, autophosphorylated and/or phosphorylated at Thr-505, within the activation loop; phosphorylation at Thr-505 is not a prerequisite for enzymatic activity. Autophosphorylated at Ser-299. Upon TNFSF10/TRAIL treatment, phosphorylated at Tyr-155; phosphorylation is required for its translocation to the endoplasmic reticulum and cleavage by caspase-3. Phosphorylated at Tyr-311, Tyr-332 and Tyr-565; phosphorylation of Tyr-311 and Tyr-565 following thrombin or zymosan stimulation potentiates its kinase activity. Phosphorylated by protein kinase PDPK1; phosphorylation is inhibited by the apoptotic C-terminal cleavage product of PKN2. Phosphorylated at Tyr-311 and Tyr-332 by SRC; phosphorylation leads to enhanced autophosphorylation at Thr-505. Phosphorylated at Tyr-311 through a SYK and SRC mechanism downstream of C-type lectin receptors activation, promoting its activation. In terms of processing, proteolytically cleaved into a catalytic subunit and a regulatory subunit by caspase-3 during apoptosis which results in kinase activation.

Its subcellular location is the cytoplasm. The protein localises to the nucleus. The protein resides in the perinuclear region. It is found in the cell membrane. It localises to the mitochondrion. Its subcellular location is the endomembrane system. It catalyses the reaction L-seryl-[protein] + ATP = O-phospho-L-seryl-[protein] + ADP + H(+). It carries out the reaction L-threonyl-[protein] + ATP = O-phospho-L-threonyl-[protein] + ADP + H(+). The enzyme catalyses L-tyrosyl-[protein] + ATP = O-phospho-L-tyrosyl-[protein] + ADP + H(+). Its activity is regulated as follows. Novel PKCs (PRKCD, PRKCE, PRKCH and PRKCQ) are calcium-insensitive, but activated by diacylglycerol (DAG) and phosphatidylserine. Three specific sites; Thr-505 (activation loop of the kinase domain), Ser-643 (turn motif) and Ser-662 (hydrophobic region), need to be phosphorylated for its full activation. Activated by caspase-3 (CASP3) cleavage during apoptosis. After cleavage, the pseudosubstrate motif in the regulatory subunit is released from the substrate recognition site of the catalytic subunit, which enables PRKCD to become constitutively activated. The catalytic subunit which displays properties of a sphingosine-dependent protein kinase is activated by D-erythro-sphingosine (Sph) or N,N-dimethyl-D-erythrosphingosine (DMS) or N,N,N-trimethyl-D-erythrosphingosine (TMS), but not by ceramide or Sph-1-P and is strongly inhibited by phosphatidylserine. In terms of biological role, calcium-independent, phospholipid- and diacylglycerol (DAG)-dependent serine/threonine-protein kinase that plays contrasting roles in cell death and cell survival by functioning as a pro-apoptotic protein during DNA damage-induced apoptosis, but acting as an anti-apoptotic protein during cytokine receptor-initiated cell death, is involved in tumor suppression, is required for oxygen radical production by NADPH oxidase and acts as a positive or negative regulator in platelet functional responses. Upon DNA damage, activates the promoter of the death-promoting transcription factor BCLAF1/Btf to trigger BCLAF1-mediated p53/TP53 gene transcription and apoptosis. In response to oxidative stress, interact with and activate CHUK/IKKA in the nucleus, causing the phosphorylation of p53/TP53. In the case of ER stress or DNA damage-induced apoptosis, can form a complex with the tyrosine-protein kinase ABL1 which trigger apoptosis independently of p53/TP53. In cytosol can trigger apoptosis by activating MAPK11 or MAPK14, inhibiting AKT1 and decreasing the level of X-linked inhibitor of apoptosis protein (XIAP), whereas in nucleus induces apoptosis via the activation of MAPK8 or MAPK9. Upon ionizing radiation treatment, is required for the activation of the apoptosis regulators BAX and BAK, which trigger the mitochondrial cell death pathway. Can phosphorylate MCL1 and target it for degradation which is sufficient to trigger for BAX activation and apoptosis. Is required for the control of cell cycle progression both at G1/S and G2/M phases. Mediates phorbol 12-myristate 13-acetate (PMA)-induced inhibition of cell cycle progression at G1/S phase by up-regulating the CDK inhibitor CDKN1A/p21 and inhibiting the cyclin CCNA2 promoter activity. In response to UV irradiation can phosphorylate CDK1, which is important for the G2/M DNA damage checkpoint activation. Can protect glioma cells from the apoptosis induced by TNFSF10/TRAIL, probably by inducing increased phosphorylation and subsequent activation of AKT1. Can also act as tumor suppressor upon mitogenic stimulation with PMA or TPA. In N-formyl-methionyl-leucyl-phenylalanine (fMLP)-treated cells, is required for NCF1 (p47-phox) phosphorylation and activation of NADPH oxidase activity, and regulates TNF-elicited superoxide anion production in neutrophils, by direct phosphorylation and activation of NCF1 or indirectly through MAPK1/3 (ERK1/2) signaling pathways. Involved in antifungal immunity by mediating phosphorylation and activation of CARD9 downstream of C-type lectin receptors activation, promoting interaction between CARD9 and BCL10, followed by activation of NF-kappa-B and MAP kinase p38 pathways. May also play a role in the regulation of NADPH oxidase activity in eosinophil after stimulation with IL5, leukotriene B4 or PMA. In collagen-induced platelet aggregation, acts a negative regulator of filopodia formation and actin polymerization by interacting with and negatively regulating VASP phosphorylation. Downstream of PAR1, PAR4 and CD36/GP4 receptors, regulates differentially platelet dense granule secretion; acts as a positive regulator in PAR-mediated granule secretion, whereas it negatively regulates CD36/GP4-mediated granule release. Phosphorylates MUC1 in the C-terminal and regulates the interaction between MUC1 and beta-catenin. The catalytic subunit phosphorylates 14-3-3 proteins (YWHAB, YWHAZ and YWHAH) in a sphingosine-dependent fashion. Phosphorylates ELAVL1 in response to angiotensin-2 treatment. Phosphorylates mitochondrial phospholipid scramblase 3 (PLSCR3), resulting in increased cardiolipin expression on the mitochondrial outer membrane which facilitates apoptosis. Phosphorylates SMPD1 which induces SMPD1 secretion. Its function is as follows. Truncated isoform 2 is inactive. The protein is Protein kinase C delta type of Rattus norvegicus (Rat).